The chain runs to 819 residues: Protein SCARECROW (819 aa).

Disordered regions lie at residues 6 to 49 (LFNG…HSER), 65 to 136 (HNNN…INNN), 212 to 231 (SQNN…RNNT), and 393 to 420 (PLST…TTTT). Over residues 15-33 (TTPDETNNNSTSNSSNIST) the composition is skewed to low complexity. Polar residues predominate over residues 79–98 (RTNNTSSLNCSLPATTQKGV). The segment covering 99-136 (TTTTTTTLASSGNNNNNNNNNNNYHYHNNNNNSIINNN) has biased composition (low complexity). Positions 418 to 448 (TTTSAELALARKKKEEIKEQKKKDEEGLHLL) form a coiled coil. The GRAS domain occupies 438–806 (KKKDEEGLHL…LCLLTASAWR (369 aa)). Residues 445–507 (LHLLTLLLQC…RLVSSCLGIY (63 aa)) are leucine repeat I (LRI). Residues 452–456 (LQCAE) carry the LxCxE motif motif. Residues 526–591 (FQVFNGISPF…GGPPYVRLTG (66 aa)) form a VHIID region. The VHIID motif lies at 557–561 (VHIID). Positions 601-633 (ATGKRLSDFANKLGLPFEFFPVAEKVGNIDVEK) are leucine repeat II (LRII). The segment at 642 to 729 (VAVHWLQHSL…QQLLSREIRN (88 aa)) is PFYRE. An SAW region spans residues 732 to 806 (AVGGPSRSGE…LCLLTASAWR (75 aa)).

It belongs to the GRAS family. Expressed in shoot apical meristem, leaf primordia, between the cortex and the differentiating vessels in lower shoots and in root endodermis.

The protein localises to the nucleus. In terms of biological role, putative transcription factor involved in asymmetric cell division. This chain is Protein SCARECROW (SCR), found in Pisum sativum (Garden pea).